The sequence spans 640 residues: Paramyosin, short form (640 aa).

2 nonhelical region regions span residues 1 to 122 (MALA…PDTV) and 420 to 640 (KLEQ…TITE). Residues 123–619 (VERSRQRRRR…IIRAKHRTFV (497 aa)) are a coiled coil.

It belongs to the paramyosin family. In terms of processing, phosphorylated. As to expression, found in all adult muscle tissues except in indirect flight muscles and a set of temporary abdominal muscles. Not detected in larval muscle.

Its subcellular location is the cytoplasm. The protein localises to the myofibril. Functionally, paramyosin is a major structural component of many thick filaments isolated from invertebrate muscles. In Drosophila melanogaster (Fruit fly), this protein is Paramyosin, short form (Prm).